We begin with the raw amino-acid sequence, 428 residues long: Glutamate-1-semialdehyde 2,1-aminomutase (428 aa).

Lysine 265 is subject to N6-(pyridoxal phosphate)lysine.

The protein belongs to the class-III pyridoxal-phosphate-dependent aminotransferase family. HemL subfamily. In terms of assembly, homodimer. Pyridoxal 5'-phosphate serves as cofactor.

The protein localises to the cytoplasm. The catalysed reaction is (S)-4-amino-5-oxopentanoate = 5-aminolevulinate. The protein operates within porphyrin-containing compound metabolism; protoporphyrin-IX biosynthesis; 5-aminolevulinate from L-glutamyl-tRNA(Glu): step 2/2. The sequence is that of Glutamate-1-semialdehyde 2,1-aminomutase from Aeromonas salmonicida (strain A449).